The following is a 487-amino-acid chain: Glutamyl-tRNA(Gln) amidotransferase subunit A (487 aa).

Catalysis depends on charge relay system residues lysine 77 and serine 152. The Acyl-ester intermediate role is filled by serine 176.

The protein belongs to the amidase family. GatA subfamily. Heterotrimer of A, B and C subunits.

It carries out the reaction L-glutamyl-tRNA(Gln) + L-glutamine + ATP + H2O = L-glutaminyl-tRNA(Gln) + L-glutamate + ADP + phosphate + H(+). Allows the formation of correctly charged Gln-tRNA(Gln) through the transamidation of misacylated Glu-tRNA(Gln) in organisms which lack glutaminyl-tRNA synthetase. The reaction takes place in the presence of glutamine and ATP through an activated gamma-phospho-Glu-tRNA(Gln). The polypeptide is Glutamyl-tRNA(Gln) amidotransferase subunit A (Ligilactobacillus salivarius (strain UCC118) (Lactobacillus salivarius)).